A 329-amino-acid chain; its full sequence is Malate dehydrogenase (329 aa).

12–18 (GAAGQIG) contacts NAD(+). Arg93 and Arg99 together coordinate substrate. NAD(+)-binding positions include Asn106, Gln113, and 130–132 (VGN). Substrate contacts are provided by Asn132 and Arg166. The Proton acceptor role is filled by His191.

The protein belongs to the LDH/MDH superfamily. MDH type 2 family.

The catalysed reaction is (S)-malate + NAD(+) = oxaloacetate + NADH + H(+). Functionally, catalyzes the reversible oxidation of malate to oxaloacetate. The polypeptide is Malate dehydrogenase (Aromatoleum aromaticum (strain DSM 19018 / LMG 30748 / EbN1) (Azoarcus sp. (strain EbN1))).